The chain runs to 736 residues: Phosphoribosylformylglycinamidine synthase subunit PurL (736 aa).

His-50 is an active-site residue. Residues Tyr-53 and Lys-92 each contribute to the ATP site. Glu-94 contacts Mg(2+). Residues 95–98 (SHNH) and Arg-117 each bind substrate. His-96 serves as the catalytic Proton acceptor. Asp-118 provides a ligand contact to Mg(2+). Gln-241 serves as a coordination point for substrate. Residue Asp-269 coordinates Mg(2+). 313-315 (ESQ) contacts substrate. ATP contacts are provided by Asp-495 and Gly-532. Residue Asn-533 participates in Mg(2+) binding. Ser-535 contacts substrate.

This sequence belongs to the FGAMS family. As to quaternary structure, monomer. Part of the FGAM synthase complex composed of 1 PurL, 1 PurQ and 2 PurS subunits.

The protein localises to the cytoplasm. The enzyme catalyses N(2)-formyl-N(1)-(5-phospho-beta-D-ribosyl)glycinamide + L-glutamine + ATP + H2O = 2-formamido-N(1)-(5-O-phospho-beta-D-ribosyl)acetamidine + L-glutamate + ADP + phosphate + H(+). Its pathway is purine metabolism; IMP biosynthesis via de novo pathway; 5-amino-1-(5-phospho-D-ribosyl)imidazole from N(2)-formyl-N(1)-(5-phospho-D-ribosyl)glycinamide: step 1/2. Its function is as follows. Part of the phosphoribosylformylglycinamidine synthase complex involved in the purines biosynthetic pathway. Catalyzes the ATP-dependent conversion of formylglycinamide ribonucleotide (FGAR) and glutamine to yield formylglycinamidine ribonucleotide (FGAM) and glutamate. The FGAM synthase complex is composed of three subunits. PurQ produces an ammonia molecule by converting glutamine to glutamate. PurL transfers the ammonia molecule to FGAR to form FGAM in an ATP-dependent manner. PurS interacts with PurQ and PurL and is thought to assist in the transfer of the ammonia molecule from PurQ to PurL. This chain is Phosphoribosylformylglycinamidine synthase subunit PurL, found in Bartonella quintana (strain Toulouse) (Rochalimaea quintana).